A 424-amino-acid chain; its full sequence is MDKFRVYGQSRLSGSVNISGAKNAALPILFAVILATEPVKLTNVPELKDIETTLNILRQLGVIANRDETGAVLLDASNINHFTAPYELVKTMRASIWALAPLVARFHQGQVSLPGGCSIGARPVDLHISGLEKLGADIVLEEGYVKAQVSDRLVGTRIVIEKVSVGATLSIMMAATLAKGTTVIENAAREPEIVDTADFLNKMGAKISGAGSDHITIEGVERLTGCEHSVVPDRIETGTFLIAAAISGGRVVCQNTKADTLDAVIDKLREAGAQVDVTENSITLDMLGNRPKAVNIRTAPHPGFPTDMQAQFTLLNMVAEGTSIITETIFENRFMHIPELIRMGGKAEIEGNTAVCHGVEQLSGTEVIATDLRASISLVLAGCIATGETIVDRIYHIDRGYEHIEDKLRGLGAKIERFSGSDEA.

22 to 23 (KN) is a binding site for phosphoenolpyruvate. Arginine 93 provides a ligand contact to UDP-N-acetyl-alpha-D-glucosamine. Residue cysteine 117 is the Proton donor of the active site. Cysteine 117 carries the post-translational modification 2-(S-cysteinyl)pyruvic acid O-phosphothioketal. Residues 122-126 (RPVDL), 162-165 (KVSV), aspartate 307, and isoleucine 329 contribute to the UDP-N-acetyl-alpha-D-glucosamine site.

It belongs to the EPSP synthase family. MurA subfamily.

It localises to the cytoplasm. It catalyses the reaction phosphoenolpyruvate + UDP-N-acetyl-alpha-D-glucosamine = UDP-N-acetyl-3-O-(1-carboxyvinyl)-alpha-D-glucosamine + phosphate. It functions in the pathway cell wall biogenesis; peptidoglycan biosynthesis. Functionally, cell wall formation. Adds enolpyruvyl to UDP-N-acetylglucosamine. The chain is UDP-N-acetylglucosamine 1-carboxyvinyltransferase from Haemophilus influenzae (strain PittGG).